Consider the following 1052-residue polypeptide: CCAAT/enhancer-binding protein zeta (1052 aa).

Disordered stretches follow at residues 1–40, 122–158, and 621–677; these read MSADQEPVAFLAKQPWRPKQVTEDPDEEDEEDGDEGKNGF, VENKKQKATEGKKTSEKKVKNKTVAEQRPESCPVSKA, and SQLD…AEKP. Acidic residues predominate over residues 23–34; the sequence is EDPDEEDEEDGD. Basic and acidic residues predominate over residues 122-150; sequence VENKKQKATEGKKTSEKKVKNKTVAEQRP. Acidic residues predominate over residues 627–643; it reads PESDEENFVDVGDDSDD. A phosphoserine mark is found at Ser629 and Ser641. The segment covering 644–677 has biased composition (basic and acidic residues); sequence EKFTDADKGTATDAVKEVESKETEPESSAEAEKP. Residue Ser837 is modified to Phosphoserine. Residues 876–969 are disordered; it reads KGAKADLEDS…QGQKKKKKSF (94 aa). A compositionally biased stretch (acidic residues) spans 883 to 932; that stretch reads EDSESSDGELGDLDDDEVSLGSMNDEDFEIDEDGGTFMDVSDDESEDAPE. Residues Ser958, Ser972, and Ser977 each carry the phosphoserine modification. A disordered region spans residues 1032–1052; the sequence is KKKKNFRKKMKAPQKPKRQRK.

The protein belongs to the CBF/MAK21 family. Ubiquitous.

The protein localises to the nucleus. Stimulates transcription from the HSP70 promoter. This is CCAAT/enhancer-binding protein zeta (Cebpz) from Mus musculus (Mouse).